The primary structure comprises 815 residues: DNA topoisomerase 1 (815 aa).

The 117-residue stretch at lysine 3–proline 119 folds into the Toprim domain. Positions 9 and 82 each coordinate Mg(2+). One can recognise a Topo IA-type catalytic domain in the interval alanine 133–valine 573. An interaction with DNA region spans residues serine 167 to glutamine 172. Tyrosine 308 functions as the O-(5'-phospho-DNA)-tyrosine intermediate in the catalytic mechanism. Positions threonine 759–glutamine 815 are disordered. Over residues threonine 774 to valine 801 the composition is skewed to basic and acidic residues.

The protein belongs to the type IA topoisomerase family. In terms of assembly, monomer. Requires Mg(2+) as cofactor.

It catalyses the reaction ATP-independent breakage of single-stranded DNA, followed by passage and rejoining.. Its function is as follows. Releases the supercoiling and torsional tension of DNA, which is introduced during the DNA replication and transcription, by transiently cleaving and rejoining one strand of the DNA duplex. Introduces a single-strand break via transesterification at a target site in duplex DNA. The scissile phosphodiester is attacked by the catalytic tyrosine of the enzyme, resulting in the formation of a DNA-(5'-phosphotyrosyl)-enzyme intermediate and the expulsion of a 3'-OH DNA strand. The free DNA strand then undergoes passage around the unbroken strand, thus removing DNA supercoils. Finally, in the religation step, the DNA 3'-OH attacks the covalent intermediate to expel the active-site tyrosine and restore the DNA phosphodiester backbone. The protein is DNA topoisomerase 1 of Xylella fastidiosa (strain Temecula1 / ATCC 700964).